Here is a 156-residue protein sequence, read N- to C-terminus: Methylated-DNA--protein-cysteine methyltransferase (156 aa).

C126 (nucleophile; methyl group acceptor) is an active-site residue.

It belongs to the MGMT family.

It is found in the cytoplasm. It carries out the reaction a 6-O-methyl-2'-deoxyguanosine in DNA + L-cysteinyl-[protein] = S-methyl-L-cysteinyl-[protein] + a 2'-deoxyguanosine in DNA. It catalyses the reaction a 4-O-methyl-thymidine in DNA + L-cysteinyl-[protein] = a thymidine in DNA + S-methyl-L-cysteinyl-[protein]. In terms of biological role, involved in the cellular defense against the biological effects of O6-methylguanine (O6-MeG) and O4-methylthymine (O4-MeT) in DNA. Repairs the methylated nucleobase in DNA by stoichiometrically transferring the methyl group to a cysteine residue in the enzyme. This is a suicide reaction: the enzyme is irreversibly inactivated. The protein is Methylated-DNA--protein-cysteine methyltransferase of Methanosarcina acetivorans (strain ATCC 35395 / DSM 2834 / JCM 12185 / C2A).